The primary structure comprises 536 residues: Bifunctional purine biosynthesis protein PurH (536 aa).

Residues 8–158 (IPAPDEVRIK…KNHAYVTIVT (151 aa)) enclose the MGS-like domain.

The protein belongs to the PurH family.

It catalyses the reaction (6R)-10-formyltetrahydrofolate + 5-amino-1-(5-phospho-beta-D-ribosyl)imidazole-4-carboxamide = 5-formamido-1-(5-phospho-D-ribosyl)imidazole-4-carboxamide + (6S)-5,6,7,8-tetrahydrofolate. The enzyme catalyses IMP + H2O = 5-formamido-1-(5-phospho-D-ribosyl)imidazole-4-carboxamide. It functions in the pathway purine metabolism; IMP biosynthesis via de novo pathway; 5-formamido-1-(5-phospho-D-ribosyl)imidazole-4-carboxamide from 5-amino-1-(5-phospho-D-ribosyl)imidazole-4-carboxamide (10-formyl THF route): step 1/1. The protein operates within purine metabolism; IMP biosynthesis via de novo pathway; IMP from 5-formamido-1-(5-phospho-D-ribosyl)imidazole-4-carboxamide: step 1/1. The protein is Bifunctional purine biosynthesis protein PurH of Rhizobium meliloti (strain 1021) (Ensifer meliloti).